The following is a 410-amino-acid chain: Cysteine desulfurase IscS (410 aa).

Pyridoxal 5'-phosphate contacts are provided by residues 80 to 81, Asn-160, Gln-188, and 208 to 210; these read AT and SGH. Lys-211 carries the N6-(pyridoxal phosphate)lysine modification. Thr-248 provides a ligand contact to pyridoxal 5'-phosphate. Cys-334 serves as the catalytic Cysteine persulfide intermediate. Residue Cys-334 coordinates [2Fe-2S] cluster.

It belongs to the class-V pyridoxal-phosphate-dependent aminotransferase family. NifS/IscS subfamily. Homodimer. Forms a heterotetramer with IscU, interacts with other sulfur acceptors. Pyridoxal 5'-phosphate serves as cofactor.

It localises to the cytoplasm. The enzyme catalyses (sulfur carrier)-H + L-cysteine = (sulfur carrier)-SH + L-alanine. Its pathway is cofactor biosynthesis; iron-sulfur cluster biosynthesis. In terms of biological role, master enzyme that delivers sulfur to a number of partners involved in Fe-S cluster assembly, tRNA modification or cofactor biosynthesis. Catalyzes the removal of elemental sulfur atoms from cysteine to produce alanine. Functions as a sulfur delivery protein for Fe-S cluster synthesis onto IscU, an Fe-S scaffold assembly protein, as well as other S acceptor proteins. The sequence is that of Cysteine desulfurase IscS from Rickettsia akari (strain Hartford).